A 330-amino-acid chain; its full sequence is ADP-L-glycero-D-manno-heptose-6-epimerase (330 aa).

NADP(+) is bound by residues Phe-10 to Ile-11, Asp-31 to Asp-32, Lys-38, Lys-53, Gln-74 to Ser-78, and Asn-91. The Proton acceptor role is filled by Tyr-138. Residue Lys-142 coordinates NADP(+). Asn-167 is a binding site for substrate. NADP(+)-binding residues include Val-168 and Lys-176. The Proton acceptor role is filled by Lys-176. Residues Arg-178, His-185, Phe-199–Trp-202, Arg-212, and Tyr-291 each bind substrate.

This sequence belongs to the NAD(P)-dependent epimerase/dehydratase family. HldD subfamily. Homopentamer. The cofactor is NADP(+).

The enzyme catalyses ADP-D-glycero-beta-D-manno-heptose = ADP-L-glycero-beta-D-manno-heptose. Its pathway is nucleotide-sugar biosynthesis; ADP-L-glycero-beta-D-manno-heptose biosynthesis; ADP-L-glycero-beta-D-manno-heptose from D-glycero-beta-D-manno-heptose 7-phosphate: step 4/4. Catalyzes the interconversion between ADP-D-glycero-beta-D-manno-heptose and ADP-L-glycero-beta-D-manno-heptose via an epimerization at carbon 6 of the heptose. The chain is ADP-L-glycero-D-manno-heptose-6-epimerase from Bordetella petrii (strain ATCC BAA-461 / DSM 12804 / CCUG 43448).